A 356-amino-acid polypeptide reads, in one-letter code: ATP-dependent 6-phosphofructokinase (356 aa).

Residues G15, 78 to 79 (KG), and 115 to 118 (GEGT) contribute to the ATP site. Residue E116 coordinates Mg(2+). Residues 138–140 (TID), R175, 182–184 (MGR), E235, R272, and 278–281 (HLQR) each bind substrate. The Proton acceptor role is filled by D140.

The protein belongs to the phosphofructokinase type A (PFKA) family. Mixed-substrate PFK group III subfamily. As to quaternary structure, homodimer or homotetramer. It depends on Mg(2+) as a cofactor.

It localises to the cytoplasm. It carries out the reaction beta-D-fructose 6-phosphate + ATP = beta-D-fructose 1,6-bisphosphate + ADP + H(+). It functions in the pathway carbohydrate degradation; glycolysis; D-glyceraldehyde 3-phosphate and glycerone phosphate from D-glucose: step 3/4. In terms of biological role, catalyzes the phosphorylation of D-fructose 6-phosphate to fructose 1,6-bisphosphate by ATP, the first committing step of glycolysis. The sequence is that of ATP-dependent 6-phosphofructokinase from Chloroflexus aggregans (strain MD-66 / DSM 9485).